Here is a 481-residue protein sequence, read N- to C-terminus: Cys-Gly metallodipeptidase DUG1 (481 aa).

H102 is a Zn(2+) binding site. D104 is a catalytic residue. D137 provides a ligand contact to Zn(2+). Catalysis depends on E171, which acts as the Proton acceptor. Residues E172, D200, and H450 each coordinate Zn(2+). S451 bears the Phosphoserine mark.

This sequence belongs to the peptidase M20A family. Homodimer. Component of the GSH degradosomal complex composed of at least DUG1, DUG2 and DUG3. The cofactor is Zn(2+). Mn(2+) is required as a cofactor.

The protein localises to the cytoplasm. Its subcellular location is the mitochondrion. Catalytic component of the GSH degradosomal complex involved in the degradation of glutathione (GSH) and other peptides containing a gamma-glu-X bond. Also functions in a DUG2-DUG3-independent manner as a dipeptidase with high specificity for Cys-Gly and no activity toward tri- or tetrapeptides. This Saccharomyces cerevisiae (strain ATCC 204508 / S288c) (Baker's yeast) protein is Cys-Gly metallodipeptidase DUG1 (DUG1).